The chain runs to 280 residues: MAAAPQAPKRGSIRKTRPLVVKTSLNNPYVISWSTLEREDIHFILQTLEAKFKLIGLQKIEDKKKRKKTALMKKQSCRPDIEISEDPKEPDGDVLVSGWTPVHVRKQLVIGVNEVTRALERNELLLVLVCKSVKPAIITSHLIQLSLSRTVPACQVPQLSERIAPVIGLKCVLALGSRKNTRDFADEVEAIIPRVPSLNVPWLPDRTQGPTDSLETEPSESQDNEILDTSFDDLTKLSKRKLAEGGQASAATLQPLKIKKLIPNPSKIRKPPKSKKSISK.

Position 2 is an N-acetylalanine (Ala2). A phosphoserine mark is found at Ser12, Ser221, and Ser230. The interval 202 to 227 is disordered; sequence WLPDRTQGPTDSLETEPSESQDNEIL. Acidic residues predominate over residues 214–226; the sequence is LETEPSESQDNEI. The disordered stretch occupies residues 254 to 280; that stretch reads QPLKIKKLIPNPSKIRKPPKSKKSISK. Positions 267-280 are enriched in basic residues; the sequence is KIRKPPKSKKSISK.

The protein belongs to the eukaryotic ribosomal protein eL8 family. Component of nuclear RNase P and RNase MRP ribonucleoproteins. RNase P consists of a catalytic RNA moiety and about 10 protein subunits; POP1, POP4, POP5, POP7, RPP14, RPP21, RPP25, RPP30, RPP38 and RPP40. Within the RNase P complex, POP1, POP7 and RPP25 form the 'finger' subcomplex, POP5, RPP14, RPP40 and homodimeric RPP30 form the 'palm' subcomplex, and RPP21, POP4 and RPP38 form the 'wrist' subcomplex. All subunits of the RNase P complex interact with the catalytic RNA. Several subunits of RNase P are also part of the RNase MRP complex. RNase MRP consists of a catalytic RNA moiety and about 8 protein subunits; POP1, POP7, RPP25, RPP30, RPP38, RPP40 and possibly also POP4 and POP5.

The protein localises to the nucleus. It is found in the nucleolus. In terms of biological role, component of ribonuclease P, a ribonucleoprotein complex that generates mature tRNA molecules by cleaving their 5'-ends. Also a component of the MRP ribonuclease complex, which cleaves pre-rRNA sequences. This Mus musculus (Mouse) protein is Ribonuclease P protein subunit p38 (Rpp38).